A 457-amino-acid chain; its full sequence is Reticulon-like protein B18 (457 aa).

The tract at residues 94 to 183 (AAVTARRSKT…SPSSDQPQDV (90 aa)) is disordered. Residues 124–136 (LRSEAMVDTKENT) show a composition bias toward basic and acidic residues. Residues 149–163 (NQRKQKKLGRSKKEK) are compositionally biased toward basic residues. The segment covering 166 to 183 (SVPLLASPSPSSDQPQDV) has biased composition (low complexity). In terms of domain architecture, Reticulon spans 195 to 385 (ISDLIMWRDV…AFWNLTSLKT (191 aa)). The next 4 membrane-spanning stretches (helical) occupy residues 208 to 228 (TLWF…AKGF), 230 to 250 (FSVF…SFLS), 314 to 334 (YGYL…SFTI), and 377 to 397 (FWNL…VVVI). A disordered region spans residues 407-457 (DSEDEEEKKQQEKTHPEQQKSPEDKSTSPRSAEEEQALVLVAETKAPKKLY). The span at 413-439 (EKKQQEKTHPEQQKSPEDKSTSPRSAE) shows a compositional bias: basic and acidic residues.

Its subcellular location is the endoplasmic reticulum membrane. In Arabidopsis thaliana (Mouse-ear cress), this protein is Reticulon-like protein B18 (RTNLB18).